The following is a 137-amino-acid chain: Small ribosomal subunit protein uS12 (137 aa).

Disordered stretches follow at residues 1 to 21 (MPTINQLVRKPRKSKVEKSDS) and 34 to 57 (VHTKLAAPQKRGVATRVGTMTPKK).

Belongs to the universal ribosomal protein uS12 family. In terms of assembly, part of the 30S ribosomal subunit. Contacts proteins S8 and S17. May interact with IF1 in the 30S initiation complex.

Functionally, with S4 and S5 plays an important role in translational accuracy. Its function is as follows. Interacts with and stabilizes bases of the 16S rRNA that are involved in tRNA selection in the A site and with the mRNA backbone. Located at the interface of the 30S and 50S subunits, it traverses the body of the 30S subunit contacting proteins on the other side and probably holding the rRNA structure together. The combined cluster of proteins S8, S12 and S17 appears to hold together the shoulder and platform of the 30S subunit. The protein is Small ribosomal subunit protein uS12 of Streptococcus mutans serotype c (strain ATCC 700610 / UA159).